The chain runs to 296 residues: MTTTLTRPADGEGSVQVQQDASVRIQEGALVIAVYGKGGIGKSTTSSNLSAAFSKLGKRVLQIGCDPKHDSTFTLTHRMVPTVIDILEEVDFHSEELRPDDFMFEGFNGVKCVESGGPPAGTGCGGYVTGQTVKLLKEHHLLEDTDVVIFDVLGDVVCGGFAAPLQHANYCLIVTANDFDSIFAMNRIVAAINAKAKNYKVRLGGVIANRSADLDQIEKFNKETGLKTMAHFKNVDAIRRSRLKKCTIFEMDSSEEGVLECQNEYLALAQKMIDKVEPLEAEPLKDREIFDLLGFD.

Residues 39-44 (GIGKST) and K68 contribute to the ATP site. Residue S43 coordinates Mg(2+). [4Fe-4S] cluster is bound by residues C124 and C158. Residue 209-210 (NR) participates in ATP binding.

Belongs to the NifH/BchL/ChlL family. In terms of assembly, homodimer. Protochlorophyllide reductase is composed of three subunits; ChlL, ChlN and ChlB. Requires [4Fe-4S] cluster as cofactor.

It catalyses the reaction chlorophyllide a + oxidized 2[4Fe-4S]-[ferredoxin] + 2 ADP + 2 phosphate = protochlorophyllide a + reduced 2[4Fe-4S]-[ferredoxin] + 2 ATP + 2 H2O. The protein operates within porphyrin-containing compound metabolism; chlorophyll biosynthesis (light-independent). Component of the dark-operative protochlorophyllide reductase (DPOR) that uses Mg-ATP and reduced ferredoxin to reduce ring D of protochlorophyllide (Pchlide) to form chlorophyllide a (Chlide). This reaction is light-independent. The L component serves as a unique electron donor to the NB-component of the complex, and binds Mg-ATP. In Prochlorococcus marinus (strain MIT 9303), this protein is Light-independent protochlorophyllide reductase iron-sulfur ATP-binding protein.